Reading from the N-terminus, the 398-residue chain is Na(+)/H(+) antiporter NhaA (398 aa).

11 helical membrane-spanning segments follow: residues 14 to 34 (AAGV…NWSV), 60 to 80 (LLLW…GLEV), 96 to 116 (MLPL…FLLF), 125 to 145 (VGWA…LTLL), 155 to 175 (VFLL…IALF), 179 to 199 (QIFW…AYLN), 214 to 234 (IVLW…GVIV), 263 to 283 (FLII…GIVL), 292 to 312 (LGIA…LSWL), 330 to 350 (IVAV…ITLL), and 362 to 382 (YAKL…YLAL).

This sequence belongs to the NhaA Na(+)/H(+) (TC 2.A.33) antiporter family.

It localises to the cell inner membrane. It carries out the reaction Na(+)(in) + 2 H(+)(out) = Na(+)(out) + 2 H(+)(in). In terms of biological role, na(+)/H(+) antiporter that extrudes sodium in exchange for external protons. This Pectobacterium carotovorum subsp. carotovorum (strain PC1) protein is Na(+)/H(+) antiporter NhaA.